We begin with the raw amino-acid sequence, 342 residues long: Isopentenyl-diphosphate delta-isomerase (342 aa).

11-12 serves as a coordination point for substrate; that stretch reads RK. FMN-binding positions include Ser68, 69–71, Ser99, and Asn127; that span reads SMT. Substrate is bound at residue 99 to 101; that stretch reads SMR. Glu163 is a binding site for Mg(2+). FMN is bound by residues Lys194, Thr224, and 295 to 296; that span reads AG.

This sequence belongs to the IPP isomerase type 2 family. As to quaternary structure, homooctamer. Dimer of tetramers. FMN serves as cofactor. It depends on NADPH as a cofactor. Mg(2+) is required as a cofactor.

It is found in the cytoplasm. The enzyme catalyses isopentenyl diphosphate = dimethylallyl diphosphate. In terms of biological role, involved in the biosynthesis of isoprenoids. Catalyzes the 1,3-allylic rearrangement of the homoallylic substrate isopentenyl (IPP) to its allylic isomer, dimethylallyl diphosphate (DMAPP). In Rickettsia typhi (strain ATCC VR-144 / Wilmington), this protein is Isopentenyl-diphosphate delta-isomerase.